Reading from the N-terminus, the 226-residue chain is Enolase-phosphatase E1 (226 aa).

It belongs to the HAD-like hydrolase superfamily. MasA/MtnC family. As to quaternary structure, monomer. It depends on Mg(2+) as a cofactor.

The catalysed reaction is 5-methylsulfanyl-2,3-dioxopentyl phosphate + H2O = 1,2-dihydroxy-5-(methylsulfanyl)pent-1-en-3-one + phosphate. It functions in the pathway amino-acid biosynthesis; L-methionine biosynthesis via salvage pathway; L-methionine from S-methyl-5-thio-alpha-D-ribose 1-phosphate: step 3/6. The protein operates within amino-acid biosynthesis; L-methionine biosynthesis via salvage pathway; L-methionine from S-methyl-5-thio-alpha-D-ribose 1-phosphate: step 4/6. Functionally, bifunctional enzyme that catalyzes the enolization of 2,3-diketo-5-methylthiopentyl-1-phosphate (DK-MTP-1-P) into the intermediate 2-hydroxy-3-keto-5-methylthiopentenyl-1-phosphate (HK-MTPenyl-1-P), which is then dephosphorylated to form the acireductone 1,2-dihydroxy-3-keto-5-methylthiopentene (DHK-MTPene). The polypeptide is Enolase-phosphatase E1 (Shewanella baltica (strain OS195)).